The sequence spans 212 residues: Probable GTP-binding protein EngB (212 aa).

One can recognise an EngB-type G domain in the interval 38 to 210; sequence SLPEIAFVGK…KASLAKCIKF (173 aa). Residues 46–53, 73–77, 91–94, 158–161, and 189–191 contribute to the GTP site; these read GKSNVGKS, GRTRQ, DLPG, TKSD, and VSN. Mg(2+)-binding residues include Ser53 and Thr75.

It belongs to the TRAFAC class TrmE-Era-EngA-EngB-Septin-like GTPase superfamily. EngB GTPase family. The cofactor is Mg(2+).

Necessary for normal cell division and for the maintenance of normal septation. In Rickettsia rickettsii (strain Sheila Smith), this protein is Probable GTP-binding protein EngB.